Here is a 466-residue protein sequence, read N- to C-terminus: Lipase 2 (466 aa).

The signal sequence occupies residues 1-16 (MKGLVFLLGLLPTIYA). Cysteine 112 and cysteine 285 are joined by a disulfide. Residue serine 196 is the Charge relay system of the active site. Residues asparagine 231, asparagine 319, and asparagine 331 are each glycosylated (N-linked (GlcNAc...) asparagine). Residues aspartate 348 and histidine 381 each act as charge relay system in the active site. Cysteines 364 and 409 form a disulfide. Residues asparagine 422 and asparagine 451 are each glycosylated (N-linked (GlcNAc...) asparagine).

This sequence belongs to the AB hydrolase superfamily. Lipase family. Class Lip subfamily.

Its subcellular location is the secreted. It carries out the reaction a triacylglycerol + H2O = a diacylglycerol + a fatty acid + H(+). Secreted lipase that is able to hydrolyze both the neutral triacylglycerols and the monopalmitate ester Tween 40, allowing the use of hydrolyzed products as carbon sources. Has broad lipolytic activity, which may be important for colonization and subsequent infection, therefore contributing to the persistence and virulence in human tissue. My be important for alimentary tract colonization, but not oral infection. Facilitates invasive disease via lipid-based suppression of the IL-17 response. Inhibits IL-17 production indirectly by suppressing IL-23 production by tissue-resident dendritic cells. In Candida albicans (strain SC5314 / ATCC MYA-2876) (Yeast), this protein is Lipase 2.